The following is a 60-amino-acid chain: Large ribosomal subunit protein bL32 (60 aa).

Residues Met-1–Asp-60 are disordered. Over residues Lys-7–Arg-16 the composition is skewed to basic residues. The span at Leu-22–Lys-31 shows a compositional bias: polar residues.

The protein belongs to the bacterial ribosomal protein bL32 family.

This Francisella tularensis subsp. holarctica (strain LVS) protein is Large ribosomal subunit protein bL32.